A 789-amino-acid chain; its full sequence is Cell pattern formation-associated protein stuA (789 aa).

Disordered stretches follow at residues 50-131 (PALS…NTVG) and 205-224 (PGGVTSSQPGPQPPTTSVSS). Composition is skewed to polar residues over residues 55-69 (PTASQPPISGQSYRT), 76-88 (ASHNASARTSLSG), and 115-131 (LDSSAPQEFSIPQNTVG). Positions 272 to 378 (RVTATLWEDE…HNIGGLLYHP (107 aa)) constitute an HTH APSES-type domain. Positions 306–327 (GTKLLNVAGMTRGRRDGILKSE) form a DNA-binding region, H-T-H motif. 3 disordered regions span residues 389–459 (QESQ…ASSL), 487–543 (SIDT…YAPQ), and 616–789 (HDSA…ARRR). 5 stretches are compositionally biased toward polar residues: residues 419–438 (LQTPVPSHMSQPHAMTSQSA), 487–529 (SIDT…SKSY), 620–636 (GYNTNRGSYTYTTNPSV), 645–667 (QLASDMSGSPSQQNGSGRMTPRT), and 676–713 (SGYNTPPRSAAVSSLYNSVSETRGASANGTTDNYSVAS). The interval 731-758 (KRMREDDDVDQIVRPDSRGAEYESKRRK) is nuclear localization domain. Residues 741–754 (QIVRPDSRGAEYES) show a composition bias toward basic and acidic residues.

Belongs to the EFG1/PHD1/stuA family.

The protein resides in the nucleus. Transcription factor that regulates asexual reproduction. Binds the StuA-response elements (StRE) with the consensus sequence 5'-(A/T)CGCG(T/A)N(A/C)-3' at the promoters of target genes. In Aspergillus flavus (strain ATCC 200026 / FGSC A1120 / IAM 13836 / NRRL 3357 / JCM 12722 / SRRC 167), this protein is Cell pattern formation-associated protein stuA.